Here is an 811-residue protein sequence, read N- to C-terminus: tRNA(Met) cytidine acetyltransferase TmcA (811 aa).

ATP-binding residues include Gln267 and Arg439. The 190-residue stretch at 473–662 folds into the N-acetyltransferase domain; it reads KKEVYLEEPD…GEFTAIVLKP (190 aa). Residues 589–591, Glu629, and Arg636 contribute to the acetyl-CoA site; that span reads IAT.

This sequence belongs to the TmcA family.

Its subcellular location is the cytoplasm. It carries out the reaction cytidine(34) in elongator tRNA(Met) + acetyl-CoA + ATP + H2O = N(4)-acetylcytidine(34) in elongator tRNA(Met) + ADP + phosphate + CoA + H(+). It catalyses the reaction a cytidine in RNA + acetyl-CoA + ATP + H2O = an N(4)-acetylcytidine in RNA + ADP + phosphate + CoA + H(+). The enzyme catalyses a cytidine in tRNA + acetyl-CoA + ATP + H2O = an N(4)-acetylcytidine in tRNA + ADP + phosphate + CoA + H(+). The catalysed reaction is a cytidine in mRNA + acetyl-CoA + ATP + H2O = an N(4)-acetylcytidine in mRNA + ADP + phosphate + CoA + H(+). Its function is as follows. Catalyzes the formation of N(4)-acetylcytidine (ac(4)C) at the wobble position of tRNA(Met), by using acetyl-CoA as an acetyl donor and ATP (or GTP). Catalyzes the formation of 267 N(4)-acetylcytidine (ac(4)C) sites in RNA, almost always on the middle C of a CCG motif. Modifications are found in rRNA, ncRNA, mRNA and tRNA. More acetylation is observed at 95 than at 75 or 85 degrees Celsius. This is tRNA(Met) cytidine acetyltransferase TmcA from Thermococcus sp. (strain AM4).